A 399-amino-acid polypeptide reads, in one-letter code: CLOCK-interacting pacemaker (399 aa).

Residues 1 to 12 (MERKNSSRESPR) show a composition bias toward basic and acidic residues. 2 disordered regions span residues 1–85 (MERK…AKNA) and 159–224 (SYTK…KLAE). Phosphoserine is present on serine 213. A coiled-coil region spans residues 333–359 (TLKTKELIRQNQATQVELDQLKEQTQL). Residues 378–388 (SLTPGSSNTGS) are compositionally biased toward polar residues. Positions 378–399 (SLTPGSSNTGSDLEAFSDHPDI) are disordered.

In terms of assembly, interacts with CLOCK. Forms a ternary complex with the CLOCK-BMAL1 heterodimer. Interacts with CAD and HSPA5.

It localises to the nucleus. It is found in the cytoplasm. The protein resides in the cytosol. Transcriptional repressor which may act as a negative-feedback regulator of CLOCK-BMAL1 transcriptional activity in the circadian-clock mechanism. May stimulate BMAL1-dependent phosphorylation of CLOCK. However, the physiological relevance of these observations is unsure, since experiments in knockout mice showed that CIPC is not critially required for basic circadian clock. The sequence is that of CLOCK-interacting pacemaker (CIPC) from Pongo abelii (Sumatran orangutan).